The primary structure comprises 386 residues: Adiponectin receptor protein 2 (386 aa).

The disordered stretch occupies residues 1–72; the sequence is MNEPAKHRLG…ECHDDNSQED (72 aa). The Cytoplasmic segment spans residues 1–147; that stretch reads MNEPAKHRLG…SIFRIHTETG (147 aa). A compositionally biased stretch (basic and acidic residues) spans 15 to 31; it reads PEPDIRLRKGHQLDDTR. Over residues 58–72 the composition is skewed to acidic residues; sequence SPEEPECHDDNSQED. A helical transmembrane segment spans residues 148–168; it reads NIWTHLLGCVFFLCLGIFYMF. Topologically, residues 169-181 are extracellular; sequence RPNISFVAPLQEK. The helical transmembrane segment at 182 to 202 threads the bilayer; sequence VVFGLFFLGAILCLSFSWLFH. Histidine 202 provides a ligand contact to Zn(2+). Topologically, residues 203–213 are cytoplasmic; sequence TVYCHSEGVSR. The chain crosses the membrane as a helical span at residues 214–234; that stretch reads LFSKLDYSGIALLIMGSFVPW. Over 235 to 245 the chain is Extracellular; the sequence is LYYSFYCNPQP. A helical transmembrane segment spans residues 246 to 266; the sequence is CFIYLIVICVLGIAAIIVSQW. The Cytoplasmic segment spans residues 267-273; that stretch reads DMFATPQ. A helical transmembrane segment spans residues 274-294; it reads YRGVRAGVFVGLGLSGIIPTL. Residues 295–309 are Extracellular-facing; that stretch reads HYVISEGFLKAATIG. The helical transmembrane segment at 310 to 330 threads the bilayer; sequence QIGWLMLMASLYITGAALYAA. Residues 331 to 348 lie on the Cytoplasmic side of the membrane; it reads RIPERFFPGKCDIWFHSH. Zn(2+) is bound by residues histidine 348 and histidine 352. A helical membrane pass occupies residues 349 to 369; sequence QLFHIFVVAGAFVHFHGVSNL. At 370-386 the chain is on the extracellular side; sequence QEFRFMIGGGCTEEDAL.

Belongs to the ADIPOR family. As to quaternary structure, may form homooligomers and heterooligomers with ADIPOR1. Interacts with APPL2 (via BAR domain); ADIPOQ dissociates this interaction. Detected in liver and quadriceps muscle (at protein level). Highly expressed in liver. Highly expressed in white adipose tissue, and at intermediate levels in brown adipose tissue. Expressed at intermediate level in heart, kidney, lung and skeletal muscle. Weakly expressed in brain, spleen and testis.

The protein resides in the cell membrane. Receptor for ADIPOQ, an essential hormone secreted by adipocytes that regulates glucose and lipid metabolism. Required for normal body fat and glucose homeostasis. ADIPOQ-binding activates a signaling cascade that leads to increased PPARA activity, and ultimately to increased fatty acid oxidation and glucose uptake. Has intermediate affinity for globular and full-length adiponectin. Required for normal revascularization after chronic ischemia caused by severing of blood vessels. This chain is Adiponectin receptor protein 2, found in Mus musculus (Mouse).